Consider the following 475-residue polypeptide: Bystin (475 aa).

Composition is skewed to basic residues over residues M1 to R12 and K29 to K41. Disordered stretches follow at residues M1 to I57 and D106 to V149. 2 stretches are compositionally biased toward acidic residues: residues E45–E54 and F107–Q119.

This sequence belongs to the bystin family.

It is found in the nucleus. It localises to the nucleolus. In terms of biological role, required for processing of 20S pre-rRNA precursor and biogenesis of 40S ribosomal subunits. This is Bystin (bysl) from Dictyostelium discoideum (Social amoeba).